The chain runs to 334 residues: L-lactate dehydrogenase B chain (334 aa).

Residues 30-58 (GQVGMACAVSILLRDLCDELALVDVMEDR) and Arg-100 each bind NAD(+). Substrate contacts are provided by Arg-107, Asn-139, and Arg-170. Asn-139 provides a ligand contact to NAD(+). His-194 serves as the catalytic Proton acceptor. Thr-249 contacts substrate.

It belongs to the LDH/MDH superfamily. LDH family. As to quaternary structure, homotetramer.

It localises to the cytoplasm. It catalyses the reaction (S)-lactate + NAD(+) = pyruvate + NADH + H(+). It participates in fermentation; pyruvate fermentation to lactate; (S)-lactate from pyruvate: step 1/1. Functionally, interconverts simultaneously and stereospecifically pyruvate and lactate with concomitant interconversion of NADH and NAD(+). The chain is L-lactate dehydrogenase B chain (ldhb) from Fundulus heteroclitus (Killifish).